The sequence spans 485 residues: Aspartyl/glutamyl-tRNA(Asn/Gln) amidotransferase subunit B (485 aa).

Belongs to the GatB/GatE family. GatB subfamily. As to quaternary structure, heterotrimer of A, B and C subunits.

The catalysed reaction is L-glutamyl-tRNA(Gln) + L-glutamine + ATP + H2O = L-glutaminyl-tRNA(Gln) + L-glutamate + ADP + phosphate + H(+). The enzyme catalyses L-aspartyl-tRNA(Asn) + L-glutamine + ATP + H2O = L-asparaginyl-tRNA(Asn) + L-glutamate + ADP + phosphate + 2 H(+). Allows the formation of correctly charged Asn-tRNA(Asn) or Gln-tRNA(Gln) through the transamidation of misacylated Asp-tRNA(Asn) or Glu-tRNA(Gln) in organisms which lack either or both of asparaginyl-tRNA or glutaminyl-tRNA synthetases. The reaction takes place in the presence of glutamine and ATP through an activated phospho-Asp-tRNA(Asn) or phospho-Glu-tRNA(Gln). This is Aspartyl/glutamyl-tRNA(Asn/Gln) amidotransferase subunit B from Opitutus terrae (strain DSM 11246 / JCM 15787 / PB90-1).